The primary structure comprises 400 residues: Phosphoglycerate kinase (400 aa).

Residues 24–26 (DFN), arginine 39, 62–65 (HLGK), arginine 123, and arginine 156 contribute to the substrate site. Residues lysine 207, glycine 298, glutamate 329, and 356-359 (GGDS) contribute to the ATP site.

The protein belongs to the phosphoglycerate kinase family. Monomer.

The protein resides in the cytoplasm. The enzyme catalyses (2R)-3-phosphoglycerate + ATP = (2R)-3-phospho-glyceroyl phosphate + ADP. It functions in the pathway carbohydrate degradation; glycolysis; pyruvate from D-glyceraldehyde 3-phosphate: step 2/5. The polypeptide is Phosphoglycerate kinase (Clostridioides difficile (strain 630) (Peptoclostridium difficile)).